Consider the following 318-residue polypeptide: tRNA dimethylallyltransferase (318 aa).

16–23 (GPTASGKS) contributes to the ATP binding site. Residue 18–23 (TASGKS) coordinates substrate. 2 interaction with substrate tRNA regions span residues 41–44 (DSRQ) and 165–169 (QRLIR).

The protein belongs to the IPP transferase family. Monomer. Mg(2+) serves as cofactor.

The enzyme catalyses adenosine(37) in tRNA + dimethylallyl diphosphate = N(6)-dimethylallyladenosine(37) in tRNA + diphosphate. Its function is as follows. Catalyzes the transfer of a dimethylallyl group onto the adenine at position 37 in tRNAs that read codons beginning with uridine, leading to the formation of N6-(dimethylallyl)adenosine (i(6)A). This Pelodictyon phaeoclathratiforme (strain DSM 5477 / BU-1) protein is tRNA dimethylallyltransferase.